Reading from the N-terminus, the 123-residue chain is MLLASKAVFKYKIFPTGTITTFNLRPLLVSDINQNDGGMVLCSSAVSSINLPSILLIHSYISFMLTLCFFLSLSTILSEMINFISISGTYKFFINIIICYKHKSSAYCVYTIVYTIKKKSTLS.

2 helical membrane-spanning segments follow: residues 55 to 77 and 92 to 114; these read LLIH…STIL and FFIN…TIVY.

The protein resides in the cell membrane. This is an uncharacterized protein from Pasteurella multocida (strain Pm70).